We begin with the raw amino-acid sequence, 228 residues long: Ribonuclease 3 1 (228 aa).

An RNase III domain is found at 1–124; the sequence is MYKLLMFRDD…VIGAYYLDNN (124 aa). Residue glutamate 37 participates in Mg(2+) binding. The active site involves aspartate 41. Residues serine 110 and glutamate 113 each coordinate Mg(2+). Glutamate 113 is an active-site residue. The DRBM domain maps to 153–223; that stretch reads DSKNRFQEWV…AENALANLNK (71 aa).

Belongs to the ribonuclease III family. As to quaternary structure, homodimer. The cofactor is Mg(2+).

The protein localises to the cytoplasm. It catalyses the reaction Endonucleolytic cleavage to 5'-phosphomonoester.. Its function is as follows. Digests double-stranded RNA. Involved in the processing of primary rRNA transcript to yield the immediate precursors to the large and small rRNAs (23S and 16S). Processes some mRNAs, and tRNAs when they are encoded in the rRNA operon. Processes pre-crRNA and tracrRNA of type II CRISPR loci if present in the organism. The polypeptide is Ribonuclease 3 1 (Nostoc sp. (strain PCC 7120 / SAG 25.82 / UTEX 2576)).